The sequence spans 157 residues: Transcriptional repressor NrdR (157 aa).

The segment at 3 to 34 (CPFCGFADTRVIDSRLGKEGNNIRRRRECSQC) is a zinc-finger region. Residues 49–139 (PLIIKKDARR…VYRQFKDINE (91 aa)) enclose the ATP-cone domain.

The protein belongs to the NrdR family. The cofactor is Zn(2+).

In terms of biological role, negatively regulates transcription of bacterial ribonucleotide reductase nrd genes and operons by binding to NrdR-boxes. The chain is Transcriptional repressor NrdR from Syntrophotalea carbinolica (strain DSM 2380 / NBRC 103641 / GraBd1) (Pelobacter carbinolicus).